The primary structure comprises 331 residues: Probable mannose-1-phosphate guanylyltransferase 3 (331 aa).

A diphosphate-binding site is contributed by lysine 3. The GDP-alpha-D-mannose site is built by glycine 66, asparagine 90, aspartate 92, glycine 127, and asparagine 154.

The protein belongs to the transferase hexapeptide repeat family.

The enzyme catalyses alpha-D-mannose 1-phosphate + GTP + H(+) = GDP-alpha-D-mannose + diphosphate. It participates in nucleotide-sugar biosynthesis; GDP-alpha-D-mannose biosynthesis; GDP-alpha-D-mannose from alpha-D-mannose 1-phosphate (GTP route): step 1/1. In terms of biological role, catalyzes a reaction of the Smirnoff-Wheeler pathway, the major route to ascorbate biosynthesis in plants. This Arabidopsis thaliana (Mouse-ear cress) protein is Probable mannose-1-phosphate guanylyltransferase 3.